The following is a 204-amino-acid chain: 3-dehydroquinate dehydratase (204 aa).

3-dehydroquinate is bound by residues S9, 30–32, and R57; that span reads ELR. H108 functions as the Proton donor/acceptor in the catalytic mechanism. The Schiff-base intermediate with substrate role is filled by K133. 3-dehydroquinate is bound by residues R167, T186, and Q190.

It belongs to the type-I 3-dehydroquinase family. In terms of assembly, homodimer.

It catalyses the reaction 3-dehydroquinate = 3-dehydroshikimate + H2O. Its pathway is metabolic intermediate biosynthesis; chorismate biosynthesis; chorismate from D-erythrose 4-phosphate and phosphoenolpyruvate: step 3/7. Functionally, involved in the third step of the chorismate pathway, which leads to the biosynthesis of aromatic amino acids. Catalyzes the cis-dehydration of 3-dehydroquinate (DHQ) and introduces the first double bond of the aromatic ring to yield 3-dehydroshikimate. The polypeptide is 3-dehydroquinate dehydratase (Metallosphaera sedula (strain ATCC 51363 / DSM 5348 / JCM 9185 / NBRC 15509 / TH2)).